Consider the following 62-residue polypeptide: MDHSVLNVLVCPVCNSNLHYDKENQLLICKADKLAYPIRENIPVMLVEEAKKLTLEEVKKYG.

It belongs to the UPF0434 family.

This is UPF0434 protein Fphi_1862 from Francisella philomiragia subsp. philomiragia (strain ATCC 25017 / CCUG 19701 / FSC 153 / O#319-036).